A 478-amino-acid polypeptide reads, in one-letter code: tRNA modification GTPase MnmE (478 aa).

(6S)-5-formyl-5,6,7,8-tetrahydrofolate is bound by residues Arg-25, Glu-82, and Lys-135. The 170-residue stretch at 231–400 (GIKVVIAGQP…LREQLLRVVG (170 aa)) folds into the TrmE-type G domain. Asn-241 provides a ligand contact to K(+). Residues 241–246 (NVGKSS), 260–266 (TPVAGTT), and 285–288 (DTAG) contribute to the GTP site. Residue Ser-245 participates in Mg(2+) binding. The K(+) site is built by Thr-260, Val-262, and Thr-265. Position 266 (Thr-266) interacts with Mg(2+). Residue Lys-478 coordinates (6S)-5-formyl-5,6,7,8-tetrahydrofolate.

The protein belongs to the TRAFAC class TrmE-Era-EngA-EngB-Septin-like GTPase superfamily. TrmE GTPase family. As to quaternary structure, homodimer. Heterotetramer of two MnmE and two MnmG subunits. The cofactor is K(+).

It localises to the cytoplasm. In terms of biological role, exhibits a very high intrinsic GTPase hydrolysis rate. Involved in the addition of a carboxymethylaminomethyl (cmnm) group at the wobble position (U34) of certain tRNAs, forming tRNA-cmnm(5)s(2)U34. This Polaromonas naphthalenivorans (strain CJ2) protein is tRNA modification GTPase MnmE.